The primary structure comprises 530 residues: Bifunctional purine biosynthesis protein PurH (530 aa).

Residues 1–148 (MEQARPIRRA…KNHKDVAIVV (148 aa)) enclose the MGS-like domain.

It belongs to the PurH family.

It catalyses the reaction (6R)-10-formyltetrahydrofolate + 5-amino-1-(5-phospho-beta-D-ribosyl)imidazole-4-carboxamide = 5-formamido-1-(5-phospho-D-ribosyl)imidazole-4-carboxamide + (6S)-5,6,7,8-tetrahydrofolate. The enzyme catalyses IMP + H2O = 5-formamido-1-(5-phospho-D-ribosyl)imidazole-4-carboxamide. It participates in purine metabolism; IMP biosynthesis via de novo pathway; 5-formamido-1-(5-phospho-D-ribosyl)imidazole-4-carboxamide from 5-amino-1-(5-phospho-D-ribosyl)imidazole-4-carboxamide (10-formyl THF route): step 1/1. It functions in the pathway purine metabolism; IMP biosynthesis via de novo pathway; IMP from 5-formamido-1-(5-phospho-D-ribosyl)imidazole-4-carboxamide: step 1/1. The polypeptide is Bifunctional purine biosynthesis protein PurH (Aeromonas hydrophila subsp. hydrophila (strain ATCC 7966 / DSM 30187 / BCRC 13018 / CCUG 14551 / JCM 1027 / KCTC 2358 / NCIMB 9240 / NCTC 8049)).